We begin with the raw amino-acid sequence, 356 residues long: Alanine racemase (356 aa).

The active-site Proton acceptor; specific for D-alanine is the lysine 35. Lysine 35 is modified (N6-(pyridoxal phosphate)lysine). A substrate-binding site is contributed by arginine 130. Catalysis depends on tyrosine 253, which acts as the Proton acceptor; specific for L-alanine. Position 301 (methionine 301) interacts with substrate.

It belongs to the alanine racemase family. Pyridoxal 5'-phosphate serves as cofactor.

The catalysed reaction is L-alanine = D-alanine. It participates in amino-acid biosynthesis; D-alanine biosynthesis; D-alanine from L-alanine: step 1/1. Its function is as follows. Catalyzes the interconversion of L-alanine and D-alanine. May also act on other amino acids. The chain is Alanine racemase (alr) from Burkholderia mallei (strain NCTC 10229).